Consider the following 570-residue polypeptide: Urease subunit alpha 1 (570 aa).

The region spanning 131–570 (GGIDTHVHFI…VPMAQRYFLF (440 aa)) is the Urease domain. Residues H136, H138, and K219 each coordinate Ni(2+). K219 carries the post-translational modification N6-carboxylysine. H221 is a binding site for substrate. Residues H248 and H274 each contribute to the Ni(2+) site. Residue H322 is the Proton donor of the active site. Position 362 (D362) interacts with Ni(2+).

Belongs to the metallo-dependent hydrolases superfamily. Urease alpha subunit family. In terms of assembly, heterotrimer of UreA (gamma), UreB (beta) and UreC (alpha) subunits. Three heterotrimers associate to form the active enzyme. Ni cation serves as cofactor. Post-translationally, carboxylation allows a single lysine to coordinate two nickel ions.

The protein resides in the cytoplasm. It catalyses the reaction urea + 2 H2O + H(+) = hydrogencarbonate + 2 NH4(+). It participates in nitrogen metabolism; urea degradation; CO(2) and NH(3) from urea (urease route): step 1/1. Its function is as follows. Disrupting the ure1 operon causes loss of urease activity, decreased resistance to low pH killing in vitro and decreased pathogen survival when inoculated in BALB/c mice by gavage. This is Urease subunit alpha 1 from Brucella suis biovar 1 (strain 1330).